Reading from the N-terminus, the 305-residue chain is MSAIDKYAVKQFLMSLQDSICQQLEQEDGKAVFVEDAWHREPGERLGGGGRSRVLRDGLVFEQGGVNFSHVEGKEMPASATAHRPELAGRRFEAMGVSLVIHPKNPYVPTSHANVRFFIAEKEGEEPIWWFGGGFDLTPFYPFEEDCQSWHDTAKAICAPFGEDVYAEHKAWCDKYFFLPHRNETRGVGGLFFDDLNHWEFDKCFDYIKAVGEGYCQAYLPIVSRRKDIEYGEREREFQLYRRGRYVEFNLVYDRGTLFGLQSGGRTESILMSMPPLARWEYRYEPEAGTPEAELYERYLKPREW.

Position 98 (Ser98) interacts with substrate. His102 and His112 together coordinate a divalent metal cation. The active-site Proton donor is His112. 114–116 (NVR) provides a ligand contact to substrate. His151 and His181 together coordinate a divalent metal cation. The segment at 246 to 281 (YVEFNLVYDRGTLFGLQSGGRTESILMSMPPLARWE) is important for dimerization. Residue 264 to 266 (GGR) coordinates substrate.

The protein belongs to the aerobic coproporphyrinogen-III oxidase family. Homodimer. Requires a divalent metal cation as cofactor.

The protein localises to the cytoplasm. The catalysed reaction is coproporphyrinogen III + O2 + 2 H(+) = protoporphyrinogen IX + 2 CO2 + 2 H2O. The protein operates within porphyrin-containing compound metabolism; protoporphyrin-IX biosynthesis; protoporphyrinogen-IX from coproporphyrinogen-III (O2 route): step 1/1. Functionally, involved in the heme biosynthesis. Catalyzes the aerobic oxidative decarboxylation of propionate groups of rings A and B of coproporphyrinogen-III to yield the vinyl groups in protoporphyrinogen-IX. The protein is Oxygen-dependent coproporphyrinogen-III oxidase of Vibrio parahaemolyticus serotype O3:K6 (strain RIMD 2210633).